A 387-amino-acid chain; its full sequence is Formate-dependent phosphoribosylglycinamide formyltransferase (387 aa).

Residues 15–16 (EL) and Glu-75 each bind N(1)-(5-phospho-beta-D-ribosyl)glycinamide. Residues Arg-106, Lys-147, 152–157 (SSGKGQ), 187–190 (EEFI), and Glu-195 contribute to the ATP site. The ATP-grasp domain occupies 111 to 301 (DLASNELNIR…EFELHLRAVL (191 aa)). The Mg(2+) site is built by Glu-260 and Glu-272. Residues Asp-279, Lys-349, and 356–357 (RR) each bind N(1)-(5-phospho-beta-D-ribosyl)glycinamide.

It belongs to the PurK/PurT family. As to quaternary structure, homodimer.

It catalyses the reaction N(1)-(5-phospho-beta-D-ribosyl)glycinamide + formate + ATP = N(2)-formyl-N(1)-(5-phospho-beta-D-ribosyl)glycinamide + ADP + phosphate + H(+). It participates in purine metabolism; IMP biosynthesis via de novo pathway; N(2)-formyl-N(1)-(5-phospho-D-ribosyl)glycinamide from N(1)-(5-phospho-D-ribosyl)glycinamide (formate route): step 1/1. Its function is as follows. Involved in the de novo purine biosynthesis. Catalyzes the transfer of formate to 5-phospho-ribosyl-glycinamide (GAR), producing 5-phospho-ribosyl-N-formylglycinamide (FGAR). Formate is provided by PurU via hydrolysis of 10-formyl-tetrahydrofolate. The protein is Formate-dependent phosphoribosylglycinamide formyltransferase of Prochlorococcus marinus (strain NATL2A).